The primary structure comprises 347 residues: Phosphate acyltransferase (347 aa).

The protein belongs to the PlsX family. Homodimer. Probably interacts with PlsY.

It localises to the cytoplasm. The catalysed reaction is a fatty acyl-[ACP] + phosphate = an acyl phosphate + holo-[ACP]. It functions in the pathway lipid metabolism; phospholipid metabolism. In terms of biological role, catalyzes the reversible formation of acyl-phosphate (acyl-PO(4)) from acyl-[acyl-carrier-protein] (acyl-ACP). This enzyme utilizes acyl-ACP as fatty acyl donor, but not acyl-CoA. This chain is Phosphate acyltransferase, found in Dehalococcoides mccartyi (strain ATCC BAA-2100 / JCM 16839 / KCTC 5957 / BAV1).